A 323-amino-acid polypeptide reads, in one-letter code: Putative CRISPR-associated protein SSO1401 (323 aa).

In terms of assembly, sometimes seen associated with the aCascade ribonucleoprotein complex, minimally composed of Csa2 and Cas5a, which binds crRNA. Other probable components of aCascade in strain P1 are Cas6 and Csa5, while SSO1399, Cas5b (SSO1400) and SSO1401 have sometimes been seen weakly associated. The Csa2-Cas5a-crRNA complex also binds target DNA homologous to crRNA, probably forming an R-loop. Purified aCascade forms a filament about 6 nm in width.

CRISPR (clustered regularly interspaced short palindromic repeat) is an adaptive immune system that provides protection against mobile genetic elements (viruses, transposable elements and conjugative plasmids). CRISPR clusters contain spacers, sequences complementary to antecedent mobile elements, and target invading nucleic acids. CRISPR clusters are transcribed and processed into CRISPR RNA (crRNA). The chain is Putative CRISPR-associated protein SSO1401 from Saccharolobus solfataricus (strain ATCC 35092 / DSM 1617 / JCM 11322 / P2) (Sulfolobus solfataricus).